We begin with the raw amino-acid sequence, 67 residues long: Large ribosomal subunit protein uL29 (67 aa).

Belongs to the universal ribosomal protein uL29 family.

The polypeptide is Large ribosomal subunit protein uL29 (Alkaliphilus oremlandii (strain OhILAs) (Clostridium oremlandii (strain OhILAs))).